A 794-amino-acid polypeptide reads, in one-letter code: MDLNLGKCCGSRSSKKESWRSVLLLAYQSLGVVYGDLSISPLYVFKSTFAEDIQHSETNEEIYGVMSFVFWTLTLVPLLKYVFIVLRADDNGEGGTFALYSLICRHVKVSLLPNRQVSDEALSTYKLEHPPEKNHDSCVKRYLEKHKWLHTALLLLVLLGTCMVIGDGLLTPAISVFSAVSGLELNMSKEHHQYAVIPITCFILVCLFSLQHFGTHRVGFVFAPIVLTWLLCISGIGLYNIIQWNPHIYKALSPTYMFMFLRKTRVSGWMSLGGILLCITGAEAMFADLGHFNYAAIQIAFTFLVYPALILAYMGQAAYLSRHHHSAHAIGFYVSVPKCLHWPVLAVAILASVVGSQAIISGTFSIINQSQSLGCFPRVKVIHTSDKMHGQIYIPEINWMLMILCIAVTIGFRDVKHLGNASGLAVMAVMLVTTCLTSLVIVLCWHKPPILALAFLLFFGSIELLYFSASLTKFREGAWLPILLSLIFMIIMFVWHYTTIKKYEFDLQNKVSLEWLLALGPSLGISRVPGIGLVFTDLTSGIPANFSRFVTNLPAFHRVLVFVCVKSVPVPFVPPAERYLVGRVGPVDHRSYRCIVRYGYRDVHQDVDSFETELVSKLADFIRYDWHKRTQQEDDNARSVQSNESSSESRLAVIGTVAYEIEDNLQPESVSIGFSTVESMEDVIQMAEPAPTATIRRVRFAVEENSYEDEGSTSSAEADAELRSELRDLLAAQEAGTAFILGHSHVKAKQGSSVMKRLAVNFGYNFLRRNCRGPDVALKVPPVSLLEVGMVYVV.

The Cytoplasmic segment spans residues 1 to 21 (MDLNLGKCCGSRSSKKESWRS). A helical transmembrane segment spans residues 22 to 42 (VLLLAYQSLGVVYGDLSISPL). Over 43–64 (YVFKSTFAEDIQHSETNEEIYG) the chain is Extracellular. A helical membrane pass occupies residues 65 to 85 (VMSFVFWTLTLVPLLKYVFIV). Residues 86–153 (LRADDNGEGG…EKHKWLHTAL (68 aa)) are Cytoplasmic-facing. A helical transmembrane segment spans residues 154–174 (LLLVLLGTCMVIGDGLLTPAI). Over 175–193 (SVFSAVSGLELNMSKEHHQ) the chain is Extracellular. Residues 194–214 (YAVIPITCFILVCLFSLQHFG) form a helical membrane-spanning segment. At 215–217 (THR) the chain is on the cytoplasmic side. The helical transmembrane segment at 218-238 (VGFVFAPIVLTWLLCISGIGL) threads the bilayer. Over 239–265 (YNIIQWNPHIYKALSPTYMFMFLRKTR) the chain is Extracellular. A helical transmembrane segment spans residues 266–286 (VSGWMSLGGILLCITGAEAMF). Over 287–294 (ADLGHFNY) the chain is Cytoplasmic. A helical transmembrane segment spans residues 295 to 315 (AAIQIAFTFLVYPALILAYMG). At 316 to 339 (QAAYLSRHHHSAHAIGFYVSVPKC) the chain is on the extracellular side. Residues 340 to 360 (LHWPVLAVAILASVVGSQAII) traverse the membrane as a helical segment. Topologically, residues 361–391 (SGTFSIINQSQSLGCFPRVKVIHTSDKMHGQ) are cytoplasmic. Residues 392-412 (IYIPEINWMLMILCIAVTIGF) traverse the membrane as a helical segment. Residues 413 to 417 (RDVKH) are Extracellular-facing. 2 helical membrane-spanning segments follow: residues 418 to 438 (LGNASGLAVMAVMLVTTCLTS) and 439 to 459 (LVIVLCWHKPPILALAFLLFF). Residues 460–476 (GSIELLYFSASLTKFRE) are Extracellular-facing. The chain crosses the membrane as a helical span at residues 477 to 497 (GAWLPILLSLIFMIIMFVWHY). Residues 498–794 (TTIKKYEFDL…LLEVGMVYVV (297 aa)) are Cytoplasmic-facing.

The protein belongs to the HAK/KUP transporter (TC 2.A.72.3) family. As to expression, slightly detected in roots, stems, leaves and flowers of mature plants and in potassium-starved plants.

The protein localises to the cell membrane. Its function is as follows. Low-affinity potassium transporter. Could mediate the potassium-dependent cell expansion in growing tissues. The chain is Potassium transporter 2 (POT2) from Arabidopsis thaliana (Mouse-ear cress).